A 238-amino-acid chain; its full sequence is Orotidine 5'-phosphate decarboxylase (238 aa).

Residues aspartate 10, lysine 32, 59–68 (DLKLHDIPNT), threonine 122, arginine 184, glutamine 193, glycine 213, and arginine 214 contribute to the substrate site. The active-site Proton donor is lysine 61.

This sequence belongs to the OMP decarboxylase family. Type 1 subfamily. In terms of assembly, homodimer.

It carries out the reaction orotidine 5'-phosphate + H(+) = UMP + CO2. The protein operates within pyrimidine metabolism; UMP biosynthesis via de novo pathway; UMP from orotate: step 2/2. Its function is as follows. Catalyzes the decarboxylation of orotidine 5'-monophosphate (OMP) to uridine 5'-monophosphate (UMP). The sequence is that of Orotidine 5'-phosphate decarboxylase from Bacillus cereus (strain G9842).